The chain runs to 67 residues: uncharacterized protein (67 aa).

This is an uncharacterized protein from Saccharomyces cerevisiae (strain ATCC 204508 / S288c) (Baker's yeast).